The sequence spans 544 residues: Inward rectifier potassium channel irk-1 (544 aa).

Topologically, residues Met-1–Trp-109 are cytoplasmic. Residues Arg-110 to Ile-134 form a helical membrane-spanning segment. The Extracellular segment spans residues Ala-135–Ser-158. Positions Val-159 to His-170 form an intramembrane region, helical; Pore-forming. The segment at residues His-171–His-177 is an intramembrane region (pore-forming). Positions Thr-172–His-177 match the Selectivity filter motif. Over Arg-178–Leu-186 the chain is Extracellular. Residues Ala-187–Ile-208 form a helical membrane-spanning segment. Topologically, residues Val-209–Thr-544 are cytoplasmic. 2 disordered regions span residues His-411–Val-448 and Leu-512–Val-533. Over residues Asn-438–Val-448 the composition is skewed to polar residues.

The protein belongs to the inward rectifier-type potassium channel (TC 1.A.2.1) family. Expressed in neurons in the head and tail with no expression detected in non-neuronal cells in these regions. Also detected in the egg-laying system of adult hermaphordites with strong expression in the HSN motor neurons and weak expression in vulval muscles.

Its subcellular location is the membrane. The protein resides in the perikaryon. The protein localises to the cell projection. Functionally, inward rectifier potassium channels are characterized by a greater tendency to allow potassium to flow into the cell rather than out of it. Required for modulation of the activity of the hermaphrodite-specific neurons (HSNs) by the G-protein coupled neuropeptide receptor egl-6 which in turn controls egg-laying behavior. This chain is Inward rectifier potassium channel irk-1 (irk-1), found in Caenorhabditis elegans.